The primary structure comprises 431 residues: Bifunctional protein GlmU (431 aa).

The segment at 1–223 is pyrophosphorylase; it reads MNLSIVILAA…EENFKGVNSK (223 aa). UDP-N-acetyl-alpha-D-glucosamine-binding positions include 8–11, Lys22, Gln74, and 81–82; these read LAAG and GT. Mg(2+) is bound at residue Asp102. UDP-N-acetyl-alpha-D-glucosamine-binding residues include Gly135, Glu149, Asn164, and Asn221. Position 221 (Asn221) interacts with Mg(2+). Residues 224-244 form a linker region; that stretch reads ADLAEAEAIMTGRIRRRWMRE. The N-acetyltransferase stretch occupies residues 245 to 431; it reads GVRMRLPETI…FFARYFSSSK (187 aa). The UDP-N-acetyl-alpha-D-glucosamine site is built by Arg308 and Lys325. The active-site Proton acceptor is His336. UDP-N-acetyl-alpha-D-glucosamine contacts are provided by Tyr339 and Asn350. Residues Ala353, 359 to 360, Ser378, Ala396, and Arg413 contribute to the acetyl-CoA site; that span reads NY.

This sequence in the N-terminal section; belongs to the N-acetylglucosamine-1-phosphate uridyltransferase family. It in the C-terminal section; belongs to the transferase hexapeptide repeat family. Homotrimer. Mg(2+) is required as a cofactor.

It localises to the cytoplasm. It carries out the reaction alpha-D-glucosamine 1-phosphate + acetyl-CoA = N-acetyl-alpha-D-glucosamine 1-phosphate + CoA + H(+). The catalysed reaction is N-acetyl-alpha-D-glucosamine 1-phosphate + UTP + H(+) = UDP-N-acetyl-alpha-D-glucosamine + diphosphate. The protein operates within nucleotide-sugar biosynthesis; UDP-N-acetyl-alpha-D-glucosamine biosynthesis; N-acetyl-alpha-D-glucosamine 1-phosphate from alpha-D-glucosamine 6-phosphate (route II): step 2/2. Its pathway is nucleotide-sugar biosynthesis; UDP-N-acetyl-alpha-D-glucosamine biosynthesis; UDP-N-acetyl-alpha-D-glucosamine from N-acetyl-alpha-D-glucosamine 1-phosphate: step 1/1. It functions in the pathway bacterial outer membrane biogenesis; LPS lipid A biosynthesis. Functionally, catalyzes the last two sequential reactions in the de novo biosynthetic pathway for UDP-N-acetylglucosamine (UDP-GlcNAc). The C-terminal domain catalyzes the transfer of acetyl group from acetyl coenzyme A to glucosamine-1-phosphate (GlcN-1-P) to produce N-acetylglucosamine-1-phosphate (GlcNAc-1-P), which is converted into UDP-GlcNAc by the transfer of uridine 5-monophosphate (from uridine 5-triphosphate), a reaction catalyzed by the N-terminal domain. The protein is Bifunctional protein GlmU of Wolinella succinogenes (strain ATCC 29543 / DSM 1740 / CCUG 13145 / JCM 31913 / LMG 7466 / NCTC 11488 / FDC 602W) (Vibrio succinogenes).